We begin with the raw amino-acid sequence, 142 residues long: Peptide methionine sulfoxide reductase MsrB (142 aa).

In terms of domain architecture, MsrB spans 2-125 (LKKDKSELTD…NSAAIQFIPY (124 aa)). Cys114 (nucleophile) is an active-site residue.

The protein belongs to the MsrB Met sulfoxide reductase family.

The enzyme catalyses L-methionyl-[protein] + [thioredoxin]-disulfide + H2O = L-methionyl-(R)-S-oxide-[protein] + [thioredoxin]-dithiol. The polypeptide is Peptide methionine sulfoxide reductase MsrB (Staphylococcus aureus (strain Mu3 / ATCC 700698)).